A 734-amino-acid chain; its full sequence is MELRFPRFSQGLAQDPTTRRIWFGIATAHDFESHDDITEERLYQNIFASHFGQLAIIFLWTSGNLFHVAWQGNFESWIQDPLHVRPIAHAIWDPHFGQPAVEAFTRGGAAGPVNIAYSGVYQWWYTIGLRTNEDLYTGALFLLFLSTLSLIGGWLHLQPKWKPSLSWFKNAESRLNHHLSGLFGVSSLAWTGHLVHVAIPASRGEYVRWNNFLDVLPYPQGLGPLLTGQWNLYAQNPDSSNHLFGTTQGAGTAILTLLGGFHPQTQSLWLTDIAHHHLAIAFIFLIAGHMYRTNFGIGHSIKDLLEAHTPPGGRLGRGHKGLYDTINNSIHFQLGLALASLGVITSLVAQHMYSLPSYAFIAQDFTTQAALYTHHQYIAGFIMTGAFAHGAIFFIRDYNPEQNEDNVLARMLDHKEAIISHLSWASLFLGFHTLGLYVHNDVMLAFGTPEKQILIEPIFAQWIQSAHGKTTYGFDILLSSTSGPAFNAGRTLWLPGWLNAVNENSNSLFLTIGPGDFLVHHAIALGLHTTTLILVKGALDARGSKLMPDKKDFGYSFPCDGPGRGGTCDISAWDAFYLAVFWMLNTIGWVTFYWHWKHITLWQGNVSQFNESSTYLMGWLRDYLWLNSSQLINGYNPFGMNSLSVWAWMFLFGHLVWATGFMFLISWRGYWQELIETLAWAHERTPLANLIRWRDKPVALSIVQARLVGLAHFSVGYIFTYAAFLIASTSGKFG.

A run of 8 helical transmembrane segments spans residues 46 to 69, 135 to 158, 175 to 199, 273 to 291, 330 to 353, 369 to 395, 417 to 439, and 517 to 535; these read IFAS…FHVA, LYTG…LHLQ, LNHH…HVAI, IAHH…GHMY, IHFQ…QHMY, AALY…IFFI, AIIS…LYVH, and FLVH…LILV. Residues C559 and C568 each contribute to the [4Fe-4S] cluster site. A run of 2 helical transmembrane segments spans residues 575-596 and 643-665; these read AFYL…YWHW and LSVW…MFLI. Chlorophyll a is bound by residues H654, M662, and Y670. W671 serves as a coordination point for phylloquinone. Residues 707–727 form a helical membrane-spanning segment; the sequence is LVGLAHFSVGYIFTYAAFLIA.

It belongs to the PsaA/PsaB family. In terms of assembly, the PsaA/B heterodimer binds the P700 chlorophyll special pair and subsequent electron acceptors. PSI consists of a core antenna complex that captures photons, and an electron transfer chain that converts photonic excitation into a charge separation. The eukaryotic PSI reaction center is composed of at least 11 subunits. P700 is a chlorophyll a/chlorophyll a' dimer, A0 is one or more chlorophyll a, A1 is one or both phylloquinones and FX is a shared 4Fe-4S iron-sulfur center. serves as cofactor.

It is found in the plastid. The protein resides in the chloroplast thylakoid membrane. The enzyme catalyses reduced [plastocyanin] + hnu + oxidized [2Fe-2S]-[ferredoxin] = oxidized [plastocyanin] + reduced [2Fe-2S]-[ferredoxin]. Its function is as follows. PsaA and PsaB bind P700, the primary electron donor of photosystem I (PSI), as well as the electron acceptors A0, A1 and FX. PSI is a plastocyanin-ferredoxin oxidoreductase, converting photonic excitation into a charge separation, which transfers an electron from the donor P700 chlorophyll pair to the spectroscopically characterized acceptors A0, A1, FX, FA and FB in turn. Oxidized P700 is reduced on the lumenal side of the thylakoid membrane by plastocyanin. This is Photosystem I P700 chlorophyll a apoprotein A2 from Oryza sativa (Rice).